A 344-amino-acid polypeptide reads, in one-letter code: DNA-directed RNA polymerase subunit alpha (344 aa).

The alpha N-terminal domain (alpha-NTD) stretch occupies residues Met1 to Glu246. Residues Glu259–Glu344 form an alpha C-terminal domain (alpha-CTD) region.

It belongs to the RNA polymerase alpha chain family. In terms of assembly, homodimer. The RNAP catalytic core consists of 2 alpha, 1 beta, 1 beta' and 1 omega subunit. When a sigma factor is associated with the core the holoenzyme is formed, which can initiate transcription.

It catalyses the reaction RNA(n) + a ribonucleoside 5'-triphosphate = RNA(n+1) + diphosphate. In terms of biological role, DNA-dependent RNA polymerase catalyzes the transcription of DNA into RNA using the four ribonucleoside triphosphates as substrates. The polypeptide is DNA-directed RNA polymerase subunit alpha (Borreliella afzelii (strain PKo) (Borrelia afzelii)).